The sequence spans 445 residues: C4-dicarboxylate transport protein (445 aa).

Helical transmembrane passes span 17–37 (FYQI…LLGY), 56–76 (LVKM…IAAM), 91–111 (VYFL…SHIV), 157–177 (FVGG…LSLA), 200–220 (LVAI…AFTI), 233–253 (MLVG…LGMV), 319–339 (IYMT…LSLG), and 367–387 (AATL…ILGV).

This sequence belongs to the dicarboxylate/amino acid:cation symporter (DAACS) (TC 2.A.23) family.

The protein resides in the cell inner membrane. In terms of biological role, responsible for the transport of dicarboxylates such as succinate, fumarate, and malate from the periplasm across the membrane. This chain is C4-dicarboxylate transport protein, found in Bordetella avium (strain 197N).